A 109-amino-acid chain; its full sequence is Nucleoid-associated protein plu3840 (109 aa).

Disordered regions lie at residues 1 to 23 and 89 to 109; these read MFGKGGLGNLMKQAQQMQDKMQK and KEKMAGISSGMQLPPGFKMPF.

It belongs to the YbaB/EbfC family. In terms of assembly, homodimer.

It localises to the cytoplasm. Its subcellular location is the nucleoid. Functionally, binds to DNA and alters its conformation. May be involved in regulation of gene expression, nucleoid organization and DNA protection. This is Nucleoid-associated protein plu3840 from Photorhabdus laumondii subsp. laumondii (strain DSM 15139 / CIP 105565 / TT01) (Photorhabdus luminescens subsp. laumondii).